A 473-amino-acid chain; its full sequence is H(+)/Cl(-) exchange transporter ClcA (473 aa).

Residues 1–32 (MKTDTSTFLAQQIVRLRRRDQIRRLMQRDKTP) are Cytoplasmic-facing. A helical membrane pass occupies residues 33–69 (LAILFMAAVVGTLTGLVGVAFEKTVSWVQNMRIGALV). Residues 70-76 (QVADHAF) are Periplasmic-facing. Residues 77–100 (LLWPLAFILSALLAMVGYFLVRKF) traverse the membrane as a helical segment. A Selectivity filter part_1 motif is present at residues 106 to 110 (GSGIP). Ser107 contributes to the chloride binding site. Residues 109–116 (IPEIEGAL) constitute an intramembrane region (helical). The Cytoplasmic portion of the chain corresponds to 117 to 123 (EELRPVR). Helical transmembrane passes span 124–141 (WWRVLPVKFIGGMGTLGA) and 148–166 (EGPTVQIGGNLGRMVLDVF). A Selectivity filter part_2 motif is present at residues 146–150 (GREGP). The Cytoplasmic segment spans residues 167 to 176 (RMRSAEARHT). 2 consecutive intramembrane regions (helical) follow at residues 177–189 (LLATGAAAGLSAA) and 193–201 (PLAGILFII). At 202–214 (EEMRPQFRYNLIS) the chain is on the cytoplasmic side. A helical membrane pass occupies residues 215–232 (IKAVFTGVIMSSIVFRIF). Residues 233 to 252 (NGEAPIIEVGKLSDAPVNTL) are Periplasmic-facing. A helical transmembrane segment spans residues 253–281 (WLYLILGIIFGCVGPVFNSLVLRTQDMFQ). Residues 282 to 287 (RFHGGE) are Cytoplasmic-facing. The chain crosses the membrane as a helical span at residues 288 to 309 (IKKWVLMGGAIGGLCGILGLIE). Residues 310-329 (PAAAGGGFNLIPIAAAGNFS) are Periplasmic-facing. 2 consecutive transmembrane segments (helical) span residues 330–349 (VGLLLFIFITRVVTTLLCFS) and 355–376 (GIFAPMLALGTLLGTAFGMAAA). The Selectivity filter part_3 signature appears at 355–359 (GIFAP). Residues Ile356 and Phe357 each contribute to the chloride site. Topologically, residues 377 to 386 (VLFPQYHLEA) are periplasmic. The segment at residues 387–401 (GTFAIAGMGALMAAS) is an intramembrane region (helical). An intramembrane region (note=Loop between two helices) is located at residues 402-404 (VRA). Positions 405–416 (PLTGIVLVLEMT) form an intramembrane region, helical. An intramembrane region (note=Loop between two helices) is located at residues 417-421 (DNYQL). The chain crosses the membrane as a helical span at residues 422–438 (ILPMIITCLGATLLAQF). The Cytoplasmic segment spans residues 439–473 (LGGKPLYSTILARTLAKQDAEQAAKNQNAPAGENT). A chloride-binding site is contributed by Tyr445.

Belongs to the chloride channel (TC 2.A.49) family. ClcA subfamily. Homodimer.

Its subcellular location is the cell inner membrane. The catalysed reaction is 2 chloride(in) + H(+)(out) = 2 chloride(out) + H(+)(in). Proton-coupled chloride transporter. Functions as antiport system and exchanges two chloride ions for 1 proton. Probably acts as an electrical shunt for an outwardly-directed proton pump that is linked to amino acid decarboxylation, as part of the extreme acid resistance (XAR) response. The polypeptide is H(+)/Cl(-) exchange transporter ClcA (Salmonella typhi).